A 187-amino-acid chain; its full sequence is Elongation factor P (187 aa).

This sequence belongs to the elongation factor P family.

The protein localises to the cytoplasm. The protein operates within protein biosynthesis; polypeptide chain elongation. In terms of biological role, involved in peptide bond synthesis. Stimulates efficient translation and peptide-bond synthesis on native or reconstituted 70S ribosomes in vitro. Probably functions indirectly by altering the affinity of the ribosome for aminoacyl-tRNA, thus increasing their reactivity as acceptors for peptidyl transferase. This is Elongation factor P from Mycobacterium sp. (strain JLS).